A 113-amino-acid polypeptide reads, in one-letter code: Class I hydrophobin POH1 (113 aa).

The signal sequence occupies residues 1–26; sequence MFSIRISTVVLAASALLAVAIPMTNT. Disulfide bonds link Cys31–Cys93, Cys38–Cys87, Cys39–Cys74, and Cys94–Cys107.

Belongs to the fungal hydrophobin family. As to quaternary structure, self-assembles to form functional amyloid fibrils called rodlets. Self-assembly into fibrillar rodlets occurs spontaneously at hydrophobic:hydrophilic interfaces and the rodlets further associate laterally to form amphipathic monolayers. Expressed in the fruiting bodies but not in vegetative mycelium.

The protein resides in the secreted. It is found in the cell wall. Aerial growth, conidiation, and dispersal of filamentous fungi in the environment rely upon a capability of their secreting small amphipathic proteins called hydrophobins (HPBs) with low sequence identity. Class I can self-assemble into an outermost layer of rodlet bundles on aerial cell surfaces, conferring cellular hydrophobicity that supports fungal growth, development and dispersal; whereas Class II form highly ordered films at water-air interfaces through intermolecular interactions but contribute nothing to the rodlet structure. POH1 is a class I hydrophobin that is involved in the formation of mycelium knots and subsequent fruiting bodies. This chain is Class I hydrophobin POH1, found in Pleurotus ostreatus (Oyster mushroom).